Consider the following 319-residue polypeptide: Replication factor C small subunit (319 aa).

Residue glycine 45–threonine 52 participates in ATP binding.

The protein belongs to the activator 1 small subunits family. RfcS subfamily. Heteropentamer composed of four small subunits (RfcS) and one large subunit (RfcL). Both subunits interact with PCNA.

Functionally, part of the RFC clamp loader complex which loads the PCNA sliding clamp onto DNA. The complex possesses DNA-dependent ATPase activity which is further stimulated by PCNA. The polypeptide is Replication factor C small subunit (rfcS) (Archaeoglobus fulgidus (strain ATCC 49558 / DSM 4304 / JCM 9628 / NBRC 100126 / VC-16)).